We begin with the raw amino-acid sequence, 143 residues long: MSVYQTYKGLPAGWVAQWDPTYQAYFYINETFEGAQPQWEPPIPGLHIPPPPGTTTVVYQKDVPRSSDGSRSMTAGLGGFMVGALAGSVLRGHRAYYAPPPPRGPLFGPRIGGGHHGPLHGPHGGFGGRGGGRMGGRGGRGRR.

The WW domain occupies 9–44; it reads GLPAGWVAQWDPTYQAYFYINETFEGAQPQWEPPIP. The tract at residues 115–143 is disordered; the sequence is HHGPLHGPHGGFGGRGGGRMGGRGGRGRR.

This chain is WW domain-containing protein C660.05, found in Schizosaccharomyces pombe (strain 972 / ATCC 24843) (Fission yeast).